The primary structure comprises 326 residues: Thrombopoietin (326 aa).

The N-terminal stretch at 1-21 (MELTDLLLVAILLLTARLTLS) is a signal peptide. 2 disulfides stabilise this stretch: Cys28-Cys172 and Cys50-Cys106. N-linked (GlcNAc...) asparagine glycosylation is found at Asn197, Asn206, Asn235, Asn249, and Asn256. The disordered stretch occupies residues 307–326 (FPPSPTFPTPGSPPQLPPVS). Positions 308–326 (PPSPTFPTPGSPPQLPPVS) are enriched in pro residues.

Belongs to the EPO/TPO family.

It is found in the secreted. Functionally, lineage-specific cytokine affecting the proliferation and maturation of megakaryocytes from their committed progenitor cells. It acts at a late stage of megakaryocyte development. It may be the major physiological regulator of circulating platelets. The sequence is that of Thrombopoietin (Thpo) from Rattus norvegicus (Rat).